The sequence spans 328 residues: 4-hydroxythreonine-4-phosphate dehydrogenase (328 aa).

Substrate-binding residues include histidine 134 and threonine 135. Histidine 164, histidine 209, and histidine 265 together coordinate a divalent metal cation. Substrate contacts are provided by lysine 273, asparagine 282, and arginine 291.

Belongs to the PdxA family. As to quaternary structure, homodimer. Requires Zn(2+) as cofactor. The cofactor is Mg(2+). Co(2+) serves as cofactor.

The protein resides in the cytoplasm. The enzyme catalyses 4-(phosphooxy)-L-threonine + NAD(+) = 3-amino-2-oxopropyl phosphate + CO2 + NADH. It participates in cofactor biosynthesis; pyridoxine 5'-phosphate biosynthesis; pyridoxine 5'-phosphate from D-erythrose 4-phosphate: step 4/5. In terms of biological role, catalyzes the NAD(P)-dependent oxidation of 4-(phosphooxy)-L-threonine (HTP) into 2-amino-3-oxo-4-(phosphooxy)butyric acid which spontaneously decarboxylates to form 3-amino-2-oxopropyl phosphate (AHAP). The sequence is that of 4-hydroxythreonine-4-phosphate dehydrogenase from Vibrio vulnificus (strain YJ016).